Here is a 314-residue protein sequence, read N- to C-terminus: Malate dehydrogenase (314 aa).

Gly7 to Gly13 provides a ligand contact to NADP(+). Residues Arg86 and Arg92 each coordinate substrate. Residues Asn99 and Ile121–Asn123 each bind NADP(+). Substrate is bound by residues Asn123 and Arg154. His178 serves as the catalytic Proton acceptor.

It belongs to the LDH/MDH superfamily.

It catalyses the reaction (S)-malate + NADP(+) = oxaloacetate + NADPH + H(+). The enzyme catalyses (S)-malate + NAD(+) = oxaloacetate + NADH + H(+). Catalyzes the reversible oxidation of malate to oxaloacetate. The sequence is that of Malate dehydrogenase (mdh) from Methanococcus maripaludis (strain DSM 14266 / JCM 13030 / NBRC 101832 / S2 / LL).